The chain runs to 643 residues: DNA polymerase III subunit tau (643 aa).

45–52 (GTRGVGKT) lines the ATP pocket. Cys-64, Cys-73, Cys-76, and Cys-79 together coordinate Zn(2+). Residues 385-404 (TPTQVPPQPQSAPQQAPTVP) form a disordered region.

This sequence belongs to the DnaX/STICHEL family. The DNA polymerase III holoenzyme complex contains at least 10 different subunits organized into 3 functionally essential subassemblies: the Pol III core, the beta sliding clamp processivity factor and the clamp-loading complex. The Pol III core (subunits alpha, epsilon and theta) contains the polymerase and the 3'-5' exonuclease proofreading activities. The polymerase is tethered to the template via the dimeric beta sliding clamp processivity factor. The clamp-loading complex (also called gamma complex) assembles the beta sliding clamp onto the primed template and plays a central role in the organization and communication at the replication fork. The clamp-loading complex contains delta, delta', psi and chi, and 3 copies of either or both of two different DnaX proteins, gamma and tau. The DNA replisome complex has a single clamp loader (3 tau and 1 each of delta, delta', psi and chi subunits) which binds 3 Pol III cores (1 core on the leading strand and 2 on the lagging strand) each with a beta sliding clamp dimer. Additional proteins in the replisome are other copies of gamma, psi and chi, Ssb, DNA helicase and RNA primase. The clamp loader hydrolyzes ATP to assemble the beta processivity factor onto the primed template and plays a central role in the organization and communication at the replication fork; the minimal complex to load the beta sliding clamp on DNA is delta, delta', gamma.

The enzyme catalyses DNA(n) + a 2'-deoxyribonucleoside 5'-triphosphate = DNA(n+1) + diphosphate. Functionally, part of the beta sliding clamp loading complex, which hydrolyzes ATP to load the beta clamp onto primed DNA to form the DNA replication pre-initiation complex. DNA polymerase III is a complex, multichain enzyme responsible for most of the replicative synthesis in bacteria. This DNA polymerase also exhibits 3'-5' exonuclease activity. The gamma complex (gamma(3),delta,delta') is thought to load beta dimers onto DNA by binding ATP which alters the complex's conformation so it can bind beta sliding clamp dimers and open them at one interface. Primed DNA is recognized, ATP is hydrolyzed releasing the gamma complex and closing the beta sliding clamp ring around the primed DNA. Serves as a scaffold to trimerize the core complex. Its function is as follows. Interacts with the delta and delta' subunits to transfer the beta subunit on the DNA. Interacts with ATP, drives ATP-induced conformational changes in the gamma complex that opens the beta sliding clamp ring. After loading of primed DNA ATP is hydrolyzed and the beta sliding clamp ring closes. The sequence is that of DNA polymerase III subunit tau (dnaX) from Escherichia coli (strain K12).